The following is a 397-amino-acid chain: Putative F-box protein At1g26510 (397 aa).

The tract at residues 1 to 23 (MRTRSKKTKTVNNNNDLQKSEEK) is disordered. The F-box domain maps to 24–71 (QKFDQLPLDLEIEMFRRLPLKSVARFLTLSKSCATTIRSPSFITSFPS).

This is Putative F-box protein At1g26510 from Arabidopsis thaliana (Mouse-ear cress).